Consider the following 1416-residue polypeptide: DNA-directed RNA polymerase subunit beta' (1416 aa).

Zn(2+) is bound by residues cysteine 71, cysteine 73, cysteine 86, and cysteine 89. Positions 461, 463, and 465 each coordinate Mg(2+). Residues cysteine 815, cysteine 889, cysteine 896, and cysteine 899 each contribute to the Zn(2+) site.

This sequence belongs to the RNA polymerase beta' chain family. In terms of assembly, the RNAP catalytic core consists of 2 alpha, 1 beta, 1 beta' and 1 omega subunit. When a sigma factor is associated with the core the holoenzyme is formed, which can initiate transcription. It depends on Mg(2+) as a cofactor. Requires Zn(2+) as cofactor.

The enzyme catalyses RNA(n) + a ribonucleoside 5'-triphosphate = RNA(n+1) + diphosphate. Functionally, DNA-dependent RNA polymerase catalyzes the transcription of DNA into RNA using the four ribonucleoside triphosphates as substrates. In Haemophilus influenzae (strain 86-028NP), this protein is DNA-directed RNA polymerase subunit beta'.